Reading from the N-terminus, the 475-residue chain is MAAARFRGLAVAGGGESSESEDDGWEIGYLDRAAQKLKEPLPIEEKNETFKRALTAGDVALVEELLDSGISVDSSFRYGWTPLMYAASVSNVDLVRVLLDRGAKASFDKDKQTILITACSARGSEEQILKCVELLLSRNADPNVACRRLMTPIMYAARDGHPQVVALLVAHGAEVNTQDENGYTALTWAARQGHKNVVLKLLELGANKMLQTKDGKTPSEIAKRNKHLEIFNFLSLTLNPLEGKLQQLTKEETICKLLTTKSDKEKDHIFSSYTAFGDLEIFLHGLGLEHMTDLLKERDITLRHLLTMRKDEFTKNGITNKDQQKILAALKELEVEEIKFGELPEMAKLEISGDEFLNFLLKLNKQCGHLITAVQNIINELPVNSHKIVLEWASPRNFTSVCEELVGKVEDLSEEVCKLKDLIQKLQNERENDPAHIPLMEEVSTWNSRILKRTAITVCGFGFLLFICKLTFQRQ.

The interval Met-1–Asp-23 is disordered. Residues Ser-17, Ser-18, and Ser-20 each carry the phosphoserine modification. ANK repeat units follow at residues Glu-45 to Ser-74, Tyr-78 to Phe-107, Asp-110 to Val-144, Arg-148 to Thr-177, Asn-181 to Leu-210, and Asp-214 to Gly-243. The 63-residue stretch at Ser-272–Glu-334 folds into the SAM domain.

Interacts with DDX4, PIWIL1, RANBP9 and TDRD1.

It localises to the cytoplasm. Functionally, plays a central role during spermatogenesis by repressing transposable elements and preventing their mobilization, which is essential for the germline integrity. Acts via the piRNA metabolic process, which mediates the repression of transposable elements during meiosis by forming complexes composed of piRNAs and Piwi proteins and governs the methylation and subsequent repression of transposons. Its association with pi-bodies suggests a participation in the primary piRNAs metabolic process. Required prior to the pachytene stage to facilitate the production of multiple types of piRNAs, including those associated with repeats involved in the regulation of retrotransposons. May act by mediating protein-protein interactions during germ cell maturation. The chain is Ankyrin repeat, SAM and basic leucine zipper domain-containing protein 1 (ASZ1) from Equus caballus (Horse).